The chain runs to 554 residues: MFNGLMDPEMIRLAQDQMSRMTPADFARIQQQMMSNPDLMNMATESMKNMRPEDLKQAAEQLKHTRPEDMAEISEKMAKASPEDIAAMRAHADAQFTYQINAAQMLKKQGNELHSRGNFSDAAEKYLRAKNNLKEIPSSKGGAILLACSLNLMSCYLKTNQHEECIKEGSEVLGYDARNVKALYRRGQAYRDLGLFEDAVSDLSKAHEVSPEDETIADVLRDVKERLAVEGPGKASRGVVIEDITEENNVTSGENKKPSKEANGHAQGVKTDVDGLQALRDNPEAIRTFQNFISKTDPDTLAALSGGKAGDMSPDMFKTASSMIGKMSPEEIQKMVQTASSFKGDNPFAPTAPSTENGFTPTPDMLKLASDMMGKMSPEERERMFNMASSLKANAPASTSYGNAEASEPRESLGASGSSSGNSFVAPRSGFEPSIPSAPPADLQEQMRNQMKDPAMRQMFTSMIKNMNPEMMASMSEQFGMKLSQEDAAKAQQAMASLSPDALEKMMRWADRAQTGMEKAKKAKKWLFGKGGLIFAILMLVLAMVLHRLGYIGN.

The Cytoplasmic segment spans residues 1–525; it reads MFNGLMDPEM…GMEKAKKAKK (525 aa). TPR repeat units lie at residues 103-136 and 180-213; these read AQML…LKEI and VKAL…SPED. Disordered stretches follow at residues 245–269 and 395–439; these read TEEN…AQGV and APAS…PSAP. The segment covering 254-263 has biased composition (basic and acidic residues); it reads ENKKPSKEAN. Over residues 412–423 the composition is skewed to low complexity; the sequence is SLGASGSSSGNS. The chain crosses the membrane as a helical span at residues 526–546; sequence WLFGKGGLIFAILMLVLAMVL. The Lumenal portion of the chain corresponds to 547-554; it reads HRLGYIGN.

Interacts (via TPR region) with HSP70-1, but not with HSP90-2. Interacts with ERDJ2A and ERDJ2B. In the ER membrane, associates with ERDJ2 in membrane complexes of 140 and 200 kDa and specifically interacts with the HSP70 and HSP90 chaperones via its TPR domain. In terms of tissue distribution, ubiquitous. Highest expression in leaves and lowest in roots.

The protein resides in the endoplasmic reticulum membrane. Its subcellular location is the plastid. It localises to the chloroplast outer membrane. In terms of biological role, plays a role in protein import into the endoplasmic reticulum (ER). May function as chaperone docking protein during post-translational protein translocation into the ER. Chaperone receptor mediating Hsp70-dependent protein targeting to chloroplasts. Interacts specifically with some chloroplast precursors, but not with mitochondrial precursors. Able to select precursors for delivery to the chloroplast translocase independently of Hsp70. The chain is Outer envelope protein 61 (OEP61) from Arabidopsis thaliana (Mouse-ear cress).